A 141-amino-acid polypeptide reads, in one-letter code: Small ribosomal subunit protein uS8c (141 aa).

The protein belongs to the universal ribosomal protein uS8 family. As to quaternary structure, part of the 30S ribosomal subunit.

It is found in the plastid. The protein resides in the chloroplast. In terms of biological role, one of the primary rRNA binding proteins, it binds directly to 16S rRNA central domain where it helps coordinate assembly of the platform of the 30S subunit. This Chlamydomonas reinhardtii (Chlamydomonas smithii) protein is Small ribosomal subunit protein uS8c (rps8).